A 175-amino-acid polypeptide reads, in one-letter code: MAKPERNKKPQQAEERDDGMREKMVAVNRVTKVVKGGRILGFAALTVVGDGDGSIGMGKGKSREVPVAVQKAMEEARRKMAKVSLKSGTVHHTVMGRHGATTVMIQPAPEGTGIIAGGAMRAVFEVVGVTNVVAKAHGSTNPYNIVRATIDGLSKVNTPAEIAAKRGLSVDQIQG.

The tract at residues 1 to 21 (MAKPERNKKPQQAEERDDGMR) is disordered. Residues 20 to 83 (MREKMVAVNR…EEARRKMAKV (64 aa)) form the S5 DRBM domain.

It belongs to the universal ribosomal protein uS5 family. Part of the 30S ribosomal subunit. Contacts proteins S4 and S8.

Its function is as follows. With S4 and S12 plays an important role in translational accuracy. In terms of biological role, located at the back of the 30S subunit body where it stabilizes the conformation of the head with respect to the body. This is Small ribosomal subunit protein uS5 from Dechloromonas aromatica (strain RCB).